The primary structure comprises 325 residues: Aminotransferase tasG (325 aa).

A substrate-binding site is contributed by glycine 35. Pyridoxal 5'-phosphate contacts are provided by residues 89-90 (TW), asparagine 143, tyrosine 174, and 203-205 (SFA). A substrate-binding site is contributed by asparagine 143. An N6-(pyridoxal phosphate)lysine modification is found at lysine 206. Arginine 214 is a pyridoxal 5'-phosphate binding site.

It belongs to the class-I pyridoxal-phosphate-dependent aminotransferase family. In terms of assembly, homodimer. The cofactor is pyridoxal 5'-phosphate.

Its pathway is secondary metabolite biosynthesis. In terms of biological role, aminotransferase; part of the gene cluster that mediates the biosynthesis of the tetramic acids Sch210971 and Sch210972, potential anti-HIV fungal natural product that contain a decalin core. The PKS module of tasS together with the enoylreductase tasC catalyze the formation of the polyketide unit which is then conjugated to 4-hydroxyl-4-methyl glutamate (HMG) by the condensation domain of the tasS NRPS module. One unique structural feature of Sch210971 and Sch210972 is the tetramic acid motif proposed to be derived from the non-proteinogenic amino acid HMG, by a Dieckmann-type condensation catalyzed by the reductase domain of tasS. The aldolase tasA catalyzes the aldol condensation of 2 molecules of pyruvic acid to yield the intermediate 4-hydroxyl-4-methyl-2-oxoglutarate (HMOG), which can then be stereoselectively transaminated, may be by tasG, to form HMG. The Diels-Alderase tas3 then uses the Dieckmann product of tasS as substrate and catalyzes the Diels-Alder cycloaddition to form the decalin ring of Sch210971 and Sch210972. The polypeptide is Aminotransferase tasG (Hapsidospora irregularis).